The sequence spans 686 residues: WD repeat-containing protein 93 (686 aa).

Positions 1–10 are enriched in polar residues; sequence MSFPRGSQTQ. The disordered stretch occupies residues 1-40; the sequence is MSFPRGSQTQKIKHPIGTRKGPLEVPPPTEKDWPKDDEQD. Positions 29-40 are enriched in basic and acidic residues; it reads TEKDWPKDDEQD. The stretch at 410–449 is one WD repeat; sequence PCAAPIAVSQLSCSSSYLVLACEDGVLTLWDLAKGFPLGV.

This chain is WD repeat-containing protein 93 (WDR93), found in Homo sapiens (Human).